We begin with the raw amino-acid sequence, 451 residues long: LisH domain-containing protein C1711.05 (451 aa).

The LisH domain maps to 6–38; it reads MKSKVCPLIYHFLQENGYVKTAQTFLKETGDKD. Residues 59–394 are disordered; it reads PYLTTEDVGK…VGDPSQWDFA (336 aa). Basic and acidic residues predominate over residues 73–98; sequence KESLEKSNDDSQKISKKGAPPEKAHS. Residues 99–120 show a composition bias toward low complexity; the sequence is SSEASGSGSSSDESDSSSSESE. A compositionally biased stretch (acidic residues) spans 135–145; that stretch reads SESESSSEDSD. The segment covering 146 to 174 has biased composition (low complexity); the sequence is SSSSSSDSESESSSEGSDSSSSSSSSESE. Acidic residues predominate over residues 189–199; sequence SESESSSEDSD. Residues 200–228 are compositionally biased toward low complexity; sequence SSSSSSDSESESSSEGSDSSSSSSSSESE. Composition is skewed to acidic residues over residues 243–253 and 278–300; these read SESESSSEDSD and DSEDDSSSDSSDSESESSSEDSD. Residues 301 to 319 show a composition bias toward low complexity; that stretch reads STSSSSDSDSSSSSEDGNS. Positions 320–332 are enriched in polar residues; sequence NTDTTTSGEVSAQ. Over residues 333 to 343 the composition is skewed to low complexity; sequence SSTNSTSSEES. A compositionally biased stretch (basic and acidic residues) spans 344–365; sequence TSVKDEDSSKIHDKSLKRKHED. Residues 369–380 show a composition bias toward low complexity; sequence STSTKSSRTTKT.

The protein resides in the nucleus. It localises to the nucleolus. The polypeptide is LisH domain-containing protein C1711.05 (Schizosaccharomyces pombe (strain 972 / ATCC 24843) (Fission yeast)).